We begin with the raw amino-acid sequence, 91 residues long: UPF0367 protein cce_2199 (91 aa).

This sequence belongs to the UPF0367 family.

In Crocosphaera subtropica (strain ATCC 51142 / BH68) (Cyanothece sp. (strain ATCC 51142)), this protein is UPF0367 protein cce_2199.